The primary structure comprises 79 residues: Acyl carrier protein (79 aa).

The region spanning 2–77 is the Carrier domain; sequence SDVAERVKKI…DAIDFIKANA (76 aa). At serine 37 the chain carries O-(pantetheine 4'-phosphoryl)serine.

The protein belongs to the acyl carrier protein (ACP) family. In terms of processing, 4'-phosphopantetheine is transferred from CoA to a specific serine of apo-ACP by AcpS. This modification is essential for activity because fatty acids are bound in thioester linkage to the sulfhydryl of the prosthetic group.

It localises to the cytoplasm. It functions in the pathway lipid metabolism; fatty acid biosynthesis. Carrier of the growing fatty acid chain in fatty acid biosynthesis. The protein is Acyl carrier protein of Azospirillum brasilense.